A 387-amino-acid chain; its full sequence is F-box only protein 4 (387 aa).

Serine 12 and serine 48 each carry phosphoserine. The F-box domain occupies 56-102 (ASTLTRLPIDVQLYILSFLSPHDLCQLGSTNHYWNETVRDPILWRYF).

Homodimer. Part of the SCF (SKP1-CUL1-F-box) E3 ubiquitin-protein ligase complex SCF(FBXO4) formed of CUL1, SKP1, RBX1 and FBXO4. Interacts with TERF1; this interaction is prevented in the presence of GNL3L. Identified in a complex with CRYAB and CCND1. Phosphorylation at Ser-12 varies during the cell cycle. It is low in resting cells and high in the S phase and the G2/M phase of the cell cycle. Phosphorylation is decreased during late G1 phase. Phosphorylation at Ser-12 promotes homodimerization and is necessary for optimal ubiquitin ligase activity towards CCND1.

It localises to the cytoplasm. It participates in protein modification; protein ubiquitination. Functionally, substrate recognition component of a SCF (SKP1-CUL1-F-box protein) E3 ubiquitin-protein ligase complex that mediates the ubiquitination and subsequent proteasomal degradation of target proteins. Promotes ubiquitination of cyclin-D1 (CCND1) and its subsequent proteasomal degradation. However, it does not act as a major regulator of CCND1 stability during the G1/S transition. Recognizes TERF1 and promotes its ubiquitination together with UBE2D1. Promotes ubiquitination of FXR1 following phosphorylation of FXR1 by GSK3B, leading to FXR1 degradation by the proteasome. In Homo sapiens (Human), this protein is F-box only protein 4 (FBXO4).